The chain runs to 190 residues: Ohanin (190 aa).

The first 20 residues, 1-20 (MLLFTLCFFADQENGGKALA), serve as a signal peptide directing secretion. In terms of domain architecture, B30.2/SPRY spans 21 to 127 (SPPGNWQKAD…RIWQKGLWWL (107 aa)). Positions 128-190 (RRLETDSDKL…IGARVSLANL (63 aa)) are excised as a propeptide.

In terms of tissue distribution, expressed by the venom gland.

The protein resides in the secreted. Neurotoxin that produces dose-dependent hypolocomotion and hyperalgesia in mice. May directly act on the central nervous system, as it is 6500-fold more potent when administered intracerebroventricularly than intraperitoneal. The sequence is that of Ohanin from Ophiophagus hannah (King cobra).